The following is a 298-amino-acid chain: tRNA dimethylallyltransferase (298 aa).

10-17 (GATATGKS) provides a ligand contact to ATP. Position 12–17 (12–17 (TATGKS)) interacts with substrate. An interaction with substrate tRNA region spans residues 35–38 (DSRQ).

It belongs to the IPP transferase family. In terms of assembly, monomer. Mg(2+) is required as a cofactor.

The catalysed reaction is adenosine(37) in tRNA + dimethylallyl diphosphate = N(6)-dimethylallyladenosine(37) in tRNA + diphosphate. Its function is as follows. Catalyzes the transfer of a dimethylallyl group onto the adenine at position 37 in tRNAs that read codons beginning with uridine, leading to the formation of N6-(dimethylallyl)adenosine (i(6)A). The chain is tRNA dimethylallyltransferase from Picosynechococcus sp. (strain ATCC 27264 / PCC 7002 / PR-6) (Agmenellum quadruplicatum).